Consider the following 512-residue polypeptide: Putative UDP-glucuronosyltransferase ugt-55 (512 aa).

A signal peptide spans 1 to 22 (MQLLTLPTLIFIFLNYGTPCLS). A helical transmembrane segment spans residues 487–507 (ILLYLDSIAMFTLTLLTMILI).

Belongs to the UDP-glycosyltransferase family.

The protein resides in the membrane. The catalysed reaction is glucuronate acceptor + UDP-alpha-D-glucuronate = acceptor beta-D-glucuronoside + UDP + H(+). This Caenorhabditis elegans protein is Putative UDP-glucuronosyltransferase ugt-55 (ugt-55).